The chain runs to 506 residues: tRNA-2-methylthio-N(6)-dimethylallyladenosine synthase (506 aa).

One can recognise an MTTase N-terminal domain in the interval 14–132 (KSYEVRTYGC…LPVLLERARV (119 aa)). Cysteine 23, cysteine 61, cysteine 95, cysteine 169, cysteine 173, and cysteine 176 together coordinate [4Fe-4S] cluster. The Radical SAM core domain maps to 155–386 (RESAYAAWVS…ALQEQISWDE (232 aa)). The TRAM domain maps to 388–456 (KKQVGRTLDV…PHHLLAEGTP (69 aa)).

It belongs to the methylthiotransferase family. MiaB subfamily. Monomer. [4Fe-4S] cluster is required as a cofactor.

It is found in the cytoplasm. The catalysed reaction is N(6)-dimethylallyladenosine(37) in tRNA + (sulfur carrier)-SH + AH2 + 2 S-adenosyl-L-methionine = 2-methylsulfanyl-N(6)-dimethylallyladenosine(37) in tRNA + (sulfur carrier)-H + 5'-deoxyadenosine + L-methionine + A + S-adenosyl-L-homocysteine + 2 H(+). In terms of biological role, catalyzes the methylthiolation of N6-(dimethylallyl)adenosine (i(6)A), leading to the formation of 2-methylthio-N6-(dimethylallyl)adenosine (ms(2)i(6)A) at position 37 in tRNAs that read codons beginning with uridine. The protein is tRNA-2-methylthio-N(6)-dimethylallyladenosine synthase of Streptomyces griseus subsp. griseus (strain JCM 4626 / CBS 651.72 / NBRC 13350 / KCC S-0626 / ISP 5235).